A 169-amino-acid chain; its full sequence is Hydroperoxy fatty acid reductase gpx1 (169 aa).

Cys41 is a catalytic residue.

It belongs to the glutathione peroxidase family. Monomer.

The catalysed reaction is a hydroperoxy polyunsaturated fatty acid + NADPH + H(+) = a hydroxy polyunsaturated fatty acid + NADP(+) + H2O. With respect to regulation, mercaptosuccinate, pCMB, and nethylmaleimide act as inhibitors of the catalytic activity. Hydroperoxy fatty acid reductase essential for the removal of lipid hydroperoxides under normal and stress conditions, leading to the protection of membrane integrity. This chain is Hydroperoxy fatty acid reductase gpx1 (gpx1), found in Synechocystis sp. (strain ATCC 27184 / PCC 6803 / Kazusa).